The sequence spans 614 residues: Zinc metalloproteinase-disintegrin-like Eoc1 (614 aa).

Residues 1 to 19 (MQVLLITISLAVLPYLGSS) form the signal peptide. Residues 20 to 193 (IILESGIVND…KASQLNLTPE (174 aa)) constitute a propeptide that is removed on maturation. Glutamine 194 is subject to Pyrrolidone carboxylic acid. The region spanning 202-398 (KHIKVAIVAD…KMPQCILIKP (197 aa)) is the Peptidase M12B domain. Asparagine 268 carries an N-linked (GlcNAc...) asparagine glycan. 3 disulfide bridges follow: cysteine 313/cysteine 393, cysteine 353/cysteine 377, and cysteine 355/cysteine 360. Residue histidine 338 coordinates Zn(2+). Glutamate 339 is an active-site residue. Histidine 342 and histidine 348 together coordinate Zn(2+). N-linked (GlcNAc...) asparagine glycosylation occurs at asparagine 376. Residues 406–492 (PPVCGNSLVE…ECPADQFQRN (87 aa)) enclose the Disintegrin domain. Residues valine 408, asparagine 411, leucine 413, glutamate 415, glutamate 418, and aspartate 421 each contribute to the Ca(2+) site. Cystine bridges form between cysteine 409/cysteine 438, cysteine 420/cysteine 433, cysteine 422/cysteine 428, cysteine 432/cysteine 455, cysteine 446/cysteine 452, cysteine 451/cysteine 477, cysteine 464/cysteine 484, cysteine 471/cysteine 503, cysteine 496/cysteine 508, cysteine 515/cysteine 565, cysteine 530/cysteine 576, cysteine 543/cysteine 553, cysteine 560/cysteine 602, and cysteine 596/cysteine 607. The D/ECD-tripeptide signature appears at 470–472 (ECD). N-linked (GlcNAc...) asparagine glycosylation occurs at asparagine 498.

Belongs to the venom metalloproteinase (M12B) family. P-III subfamily. P-IIIc sub-subfamily. As to quaternary structure, heterodimer; disulfide-linked. Zn(2+) is required as a cofactor. Expressed by the venom gland.

It is found in the secreted. In terms of biological role, this metalloproteinase hydrolyzes azocasein, and oxidized insulin B-chain. Also hydrolyzes the alpha-chain (FGA) and more slowly the beta-chain of fibrinogen (FGB), without affecting the gamma-chain. Does not cleave fibrin. Inhibits endothelial cell adhesion to extracellular matrix proteins such as fibrinogen, fibronectin, vitronectin, collagen I, and collagen IV. Induces apoptosis in vascular endothelial cells. This chain is Zinc metalloproteinase-disintegrin-like Eoc1 (Svmp3-Eoc1), found in Echis ocellatus (Ocellated saw-scaled viper).